Consider the following 66-residue polypeptide: MSGKKSNLPDGRIPDRLPDGRPAVAWKSRWTEGTLPLWLVATAGGMAVIFVVGLFFYGSYVGVGSA.

Residues 37 to 57 (LWLVATAGGMAVIFVVGLFFY) form a helical membrane-spanning segment.

The protein belongs to the PsbJ family. PSII is composed of 1 copy each of membrane proteins PsbA, PsbB, PsbC, PsbD, PsbE, PsbF, PsbH, PsbI, PsbJ, PsbK, PsbL, PsbM, PsbT, PsbX, PsbY, PsbZ, Psb30/Ycf12, peripheral proteins PsbO, CyanoQ (PsbQ), PsbU, PsbV and a large number of cofactors. It forms dimeric complexes.

The protein resides in the cellular thylakoid membrane. One of the components of the core complex of photosystem II (PSII). PSII is a light-driven water:plastoquinone oxidoreductase that uses light energy to abstract electrons from H(2)O, generating O(2) and a proton gradient subsequently used for ATP formation. It consists of a core antenna complex that captures photons, and an electron transfer chain that converts photonic excitation into a charge separation. In Synechococcus sp. (strain CC9311), this protein is Photosystem II reaction center protein J.